Here is a 1045-residue protein sequence, read N- to C-terminus: Translation initiation factor IF-2 (1045 aa).

2 disordered regions span residues 1–169 (MSDE…AQAP) and 184–451 (QAPA…RGGP). Residues 83-94 (SGGGGSSAGGLS) are compositionally biased toward gly residues. Over residues 103-123 (RAIEAAREHQERQAAERRAAE) the composition is skewed to basic and acidic residues. Residues 124 to 151 (ARAASEAAAARDAAAKSAAAAKAAAAPA) show a composition bias toward low complexity. The span at 152–163 (PEAPAAPAPTPA) shows a compositional bias: pro residues. Low complexity predominate over residues 184–199 (QAPAAPVAAAPAAPRA). Composition is skewed to basic and acidic residues over residues 227–237 (EPSRDRRDDRS) and 302–323 (RNDR…RPQG). Positions 338–348 (RPAPGARPGPG) are enriched in pro residues. The span at 352–363 (GARPGVPASAPA) shows a compositional bias: low complexity. 2 stretches are compositionally biased toward basic and acidic residues: residues 381 to 393 (VGRK…DRRK) and 438 to 450 (RARE…RRGG). The tr-type G domain maps to 540 to 710 (PRPPVVTVMG…LLLAEVMDLK (171 aa)). The interval 549 to 556 (GHVDHGKT) is G1. Residue 549 to 556 (GHVDHGKT) participates in GTP binding. The interval 574–578 (GITQH) is G2. Residues 596–599 (DTPG) form a G3 region. Residues 596–600 (DTPGH) and 650–653 (NKMD) each bind GTP. The G4 stretch occupies residues 650–653 (NKMD). The G5 stretch occupies residues 686–688 (SAK).

It belongs to the TRAFAC class translation factor GTPase superfamily. Classic translation factor GTPase family. IF-2 subfamily.

It is found in the cytoplasm. Functionally, one of the essential components for the initiation of protein synthesis. Protects formylmethionyl-tRNA from spontaneous hydrolysis and promotes its binding to the 30S ribosomal subunits. Also involved in the hydrolysis of GTP during the formation of the 70S ribosomal complex. In Caulobacter sp. (strain K31), this protein is Translation initiation factor IF-2.